A 250-amino-acid chain; its full sequence is uncharacterized protein (250 aa).

The stretch at 165 to 208 (HLNLETANTKATEYQKNYQEELKQRQELRQKLLQERTQKMLEAL) forms a coiled coil. The span at 201-233 (TQKMLEALHQEETPEQDARDTAKKKTDQEEHTM) shows a compositional bias: basic and acidic residues. A disordered region spans residues 201-250 (TQKMLEALHQEETPEQDARDTAKKKTDQEEHTMRKANAPKTKASGEAPTP).

This is an uncharacterized protein from Treponema pallidum (strain Nichols).